The following is a 455-amino-acid chain: Vimentin (455 aa).

Residues 1–87 form a head region; it reads MASRTNTSSY…GLADAINTEF (87 aa). The stretch at 87–122 forms a coiled coil; sequence FKTNRTNEKAEMQHLNDRFASYIDKVRFLEQQNKIL. The coil 1A stretch occupies residues 88-122; it reads KTNRTNEKAEMQHLNDRFASYIDKVRFLEQQNKIL. An IF rod domain is found at 94 to 402; the sequence is EKAEMQHLND…KLLEGEESRI (309 aa). The segment at 123 to 144 is linker 1; it reads IAELEQMRGKGSSRVGDLYQDE. Residues 145 to 236 adopt a coiled-coil conformation; that stretch reads MRELRRQVDQ…KLHDEELAEL (92 aa). The coil 1B stretch occupies residues 145–236; it reads MRELRRQVDQ…KLHDEELAEL (92 aa). The linker 12 stretch occupies residues 237 to 259; it reads QIQIQEQHVQIDMEVAKPDLTAA. The segment at 260–398 is coil 2; that stretch reads LKDVRQQYET…ATYRKLLEGE (139 aa). Residues 294 to 398 are a coiled coil; it reads ARNNEAIRLA…ATYRKLLEGE (105 aa). The tract at residues 399-455 is tail; the sequence is ESRITTPFPNLSSLTLRETMKETRPAMDSLSKKVVIKTIETRDGHIINESSQNDDLE.

It belongs to the intermediate filament family. In terms of assembly, homomer assembled from elementary dimers. One of the most prominent phosphoproteins in various cells of mesenchymal origin. Phosphorylation is enhanced during cell division, at which time vimentin filaments are significantly reorganized.

The protein resides in the cytoplasm. The protein localises to the cytoskeleton. It is found in the nucleus matrix. Vimentins are class-III intermediate filaments found in various non-epithelial cells, especially mesenchymal cells. Vimentin is attached to the nucleus, endoplasmic reticulum, and mitochondria, either laterally or terminally. The protein is Vimentin (vim) of Cyprinus carpio (Common carp).